The sequence spans 506 residues: Aldehyde dehydrogenase (506 aa).

218 to 224 (GFGLEAG) is a binding site for NAD(+). Catalysis depends on residues Glu262 and Cys301.

Belongs to the aldehyde dehydrogenase family.

It carries out the reaction an aldehyde + NAD(+) + H2O = a carboxylate + NADH + 2 H(+). The polypeptide is Aldehyde dehydrogenase (Rhodospirillum rubrum (strain ATCC 11170 / ATH 1.1.1 / DSM 467 / LMG 4362 / NCIMB 8255 / S1)).